We begin with the raw amino-acid sequence, 366 residues long: Erythronate-4-phosphate dehydrogenase (366 aa).

Substrate-binding residues include S46 and T67. NAD(+) is bound by residues D147 and T175. R208 is a catalytic residue. D228 lines the NAD(+) pocket. E233 is a catalytic residue. Residue H250 is the Proton donor of the active site. G253 is a binding site for NAD(+). Substrate is bound at residue Y254.

It belongs to the D-isomer specific 2-hydroxyacid dehydrogenase family. PdxB subfamily. As to quaternary structure, homodimer.

The protein localises to the cytoplasm. It catalyses the reaction 4-phospho-D-erythronate + NAD(+) = (R)-3-hydroxy-2-oxo-4-phosphooxybutanoate + NADH + H(+). The protein operates within cofactor biosynthesis; pyridoxine 5'-phosphate biosynthesis; pyridoxine 5'-phosphate from D-erythrose 4-phosphate: step 2/5. Catalyzes the oxidation of erythronate-4-phosphate to 3-hydroxy-2-oxo-4-phosphonooxybutanoate. The chain is Erythronate-4-phosphate dehydrogenase from Coxiella burnetii (strain Dugway 5J108-111).